Here is a 123-residue protein sequence, read N- to C-terminus: MIQEQTMLTVADNSGARRVMCIKVLGGSHRRYAGIGDVIKITIKEAIPRGKVKKGDVLKAVVVRTKKGVRRPDGSVIRFDGNACVILNNNSEQPIGTRIFGPVTRELRNEKFMKIISLAPEVL.

The protein belongs to the universal ribosomal protein uL14 family. In terms of assembly, part of the 50S ribosomal subunit. Forms a cluster with proteins L3 and L19. In the 70S ribosome, L14 and L19 interact and together make contacts with the 16S rRNA in bridges B5 and B8.

Functionally, binds to 23S rRNA. Forms part of two intersubunit bridges in the 70S ribosome. The sequence is that of Large ribosomal subunit protein uL14 from Serratia proteamaculans (strain 568).